Here is a 177-residue protein sequence, read N- to C-terminus: CDP-archaeol synthase (177 aa).

The next 5 helical transmembrane spans lie at 6 to 26, 54 to 74, 90 to 110, 124 to 144, and 148 to 168; these read LFAS…ACIF, CIFG…LVDF, VILA…GSFI, LLDQ…VAPI, and MIII…IIAY.

This sequence belongs to the CDP-archaeol synthase family. Requires Mg(2+) as cofactor.

The protein resides in the cell membrane. It catalyses the reaction 2,3-bis-O-(geranylgeranyl)-sn-glycerol 1-phosphate + CTP + H(+) = CDP-2,3-bis-O-(geranylgeranyl)-sn-glycerol + diphosphate. Its pathway is membrane lipid metabolism; glycerophospholipid metabolism. Functionally, catalyzes the formation of CDP-2,3-bis-(O-geranylgeranyl)-sn-glycerol (CDP-archaeol) from 2,3-bis-(O-geranylgeranyl)-sn-glycerol 1-phosphate (DGGGP) and CTP. This reaction is the third ether-bond-formation step in the biosynthesis of archaeal membrane lipids. The polypeptide is CDP-archaeol synthase (Methanocaldococcus jannaschii (strain ATCC 43067 / DSM 2661 / JAL-1 / JCM 10045 / NBRC 100440) (Methanococcus jannaschii)).